Consider the following 667-residue polypeptide: Polypeptide N-acetylgalactosaminyltransferase 3 (667 aa).

Residues 1–12 (MGLRFQQLKKLW) lie on the Cytoplasmic side of the membrane. The chain crosses the membrane as a helical; Signal-anchor for type II membrane protein span at residues 13–35 (LLYLFLLFFAFFMFAISINLYVA). The Lumenal segment spans residues 36–667 (SIQGGDAEMR…WGFIPLPWRM (632 aa)). N-linked (GlcNAc...) asparagine glycans are attached at residues N75 and N129. Intrachain disulfides connect C140–C375, C366–C446, C526–C547, C572–C601, and C626–C649. A catalytic subdomain A region spans residues 149–259 (LPSTSVIIVF…RGWLEPLLSR (111 aa)). Residues D190 and R220 each coordinate substrate. Residues D243 and H245 each contribute to the Mn(2+) site. N279 and N313 each carry an N-linked (GlcNAc...) asparagine glycan. The catalytic subdomain B stretch occupies residues 321-383 (PIATPGMAGG…PCSHVGHVFR (63 aa)). W352 lines the substrate pocket. H380 serves as a coordination point for Mn(2+). Substrate is bound by residues R383 and Y388. N-linked (GlcNAc...) asparagine glycosylation is present at N433. The region spanning 513 to 661 (EELMALIDLE…KDITQKWGFI (149 aa)) is the Ricin B-type lectin domain. N590 carries an N-linked (GlcNAc...) asparagine glycan.

The protein belongs to the glycosyltransferase 2 family. GalNAc-T subfamily. Mn(2+) serves as cofactor. In terms of tissue distribution, expressed in developing oocytes and egg chambers. During embryonic stages 9-11, expressed in the primordiums of the foregut, midgut and hindgut. During embryonic stages 12-13, expression is found uniquely in the posterior spiracle. During embryonic stages 14-17, expressed in the pharynx, esophagus and posterior spiracles. Expression observed in the epidermis during embryonic stages 16-17. In third instar larvae, expressed ubiquitously in wing, with increased expression in pleura and notum, eye-antennal, leg and haltere imaginal disks.

The protein localises to the golgi apparatus membrane. The enzyme catalyses L-seryl-[protein] + UDP-N-acetyl-alpha-D-galactosamine = a 3-O-[N-acetyl-alpha-D-galactosaminyl]-L-seryl-[protein] + UDP + H(+). It catalyses the reaction L-threonyl-[protein] + UDP-N-acetyl-alpha-D-galactosamine = a 3-O-[N-acetyl-alpha-D-galactosaminyl]-L-threonyl-[protein] + UDP + H(+). The protein operates within protein modification; protein glycosylation. In terms of biological role, catalyzes the initial reaction in O-linked oligosaccharide biosynthesis, the transfer of an N-acetyl-D-galactosamine residue to a serine or threonine residue on the protein receptor. It can both act as a peptide transferase that transfers GalNAc onto unmodified peptide substrates, and as a glycopeptide transferase that requires the prior addition of a GalNAc on a peptide before adding additional GalNAc moieties. Prefers EA2 as substrate. Has weak activity toward Muc5AC-3, -13 and -3/13 substrates. Plays a critical role in the regulation of integrin-mediated cell adhesion during wing development by influencing, via glycosylation, the secretion and localization of the integrin ligand Tig to the basal cell layer interface. Might have a role in protein O-glycosylation in the Golgi and thereby in establishing and/or maintaining a proper secretory apparatus structure. Together with Pgant35A, regulates integrin levels and activity-dependent integrin signaling at the synapse in neurons and muscles. This chain is Polypeptide N-acetylgalactosaminyltransferase 3, found in Drosophila melanogaster (Fruit fly).